The following is a 133-amino-acid chain: MTSTFALVLLLGGMAVCVATGVFGGYSERANHQANPEFLNLAHYATSTWSAQQPGKTHFDTVAEVVKVETQVVAGTNYRLTLKVAESTCELTSTYNKDTCLPKADAAHRTCTTVVFENLQGDKSVSPFECEAA.

Positions 1 to 19 (MTSTFALVLLLGGMAVCVA) are cleaved as a signal peptide. A Cystatin domain is found at 30–118 (ANHQANPEFL…RTCTTVVFEN (89 aa)). Cystine bridges form between cysteine 89/cysteine 100 and cysteine 111/cysteine 130.

Belongs to the cystatin family. In terms of assembly, monomer. Can form homodimers in vitro, but probably not in vivo. Homodimers are predicted to be inactive; dimerization disrupts the interaction with target proteases. Detected in saliva (at protein level). Detected in salivary gland and midgut.

The protein resides in the secreted. Its function is as follows. Contributes to the suppression of the host's immune response to tick salivary proteins and is important for successful feeding on hosts. Inhibitor of cysteine proteinases. Inhibits host papain and cathepsin L (CTSL) (in vitro). Inhibits host cathepsin S (CTSS) (in vitro). Inhibits host CTSV and CTSC, but to a lesser degree (in vitro). Inhibits host immune responses via its inhibition of host cathepsins. Inhibits differentiation of host dendritic cells. Inhibits proliferation of host T-cells in response to antigen stimulus. Down-regulates IL1B production by host mast cells, and this then leads to impaired activation of IL1R1, resulting in decreased IL9 production. Inhibits host inflammatory reactions and recruitment of host neutrophils. Attenuates IFN-beta (IFNB1)-triggered JAK/STAT signaling pathway in mouse dendritic cells. (Microbial infection) Down-regulates TLR2-mediated host responses to infection by Borrelia burgdorferi and the production of the chemokine CCL3 by host dendritic cells. Down-regulates host responses to infection by B.burgdorferi and the production of IFNB1 by host dendritic cells. The chain is Salivary cystatin-L from Ixodes scapularis (Black-legged tick).